The following is a 289-amino-acid chain: Energy-coupling factor transporter ATP-binding protein EcfA2 (289 aa).

The region spanning 3 to 246 (IQAKKLNYTY…PEWLKNHHLN (244 aa)) is the ABC transporter domain. Residue 40–47 (GHTGSGKS) coordinates ATP.

This sequence belongs to the ABC transporter superfamily. Energy-coupling factor EcfA family. As to quaternary structure, forms a stable energy-coupling factor (ECF) transporter complex composed of 2 membrane-embedded substrate-binding proteins (S component), 2 ATP-binding proteins (A component) and 2 transmembrane proteins (T component).

Its subcellular location is the cell membrane. ATP-binding (A) component of a common energy-coupling factor (ECF) ABC-transporter complex. Unlike classic ABC transporters this ECF transporter provides the energy necessary to transport a number of different substrates. This Ligilactobacillus salivarius (strain UCC118) (Lactobacillus salivarius) protein is Energy-coupling factor transporter ATP-binding protein EcfA2.